The following is a 232-amino-acid chain: Phosphatidylserine decarboxylase proenzyme (232 aa).

Ser-190 (schiff-base intermediate with substrate; via pyruvic acid) is an active-site residue. Ser-190 is modified (pyruvic acid (Ser); by autocatalysis).

It belongs to the phosphatidylserine decarboxylase family. PSD-A subfamily. As to quaternary structure, heterodimer of a large membrane-associated beta subunit and a small pyruvoyl-containing alpha subunit. The cofactor is pyruvate. Post-translationally, is synthesized initially as an inactive proenzyme. Formation of the active enzyme involves a self-maturation process in which the active site pyruvoyl group is generated from an internal serine residue via an autocatalytic post-translational modification. Two non-identical subunits are generated from the proenzyme in this reaction, and the pyruvate is formed at the N-terminus of the alpha chain, which is derived from the carboxyl end of the proenzyme. The post-translation cleavage follows an unusual pathway, termed non-hydrolytic serinolysis, in which the side chain hydroxyl group of the serine supplies its oxygen atom to form the C-terminus of the beta chain, while the remainder of the serine residue undergoes an oxidative deamination to produce ammonia and the pyruvoyl prosthetic group on the alpha chain.

Its subcellular location is the cell membrane. The enzyme catalyses a 1,2-diacyl-sn-glycero-3-phospho-L-serine + H(+) = a 1,2-diacyl-sn-glycero-3-phosphoethanolamine + CO2. It participates in phospholipid metabolism; phosphatidylethanolamine biosynthesis; phosphatidylethanolamine from CDP-diacylglycerol: step 2/2. Catalyzes the formation of phosphatidylethanolamine (PtdEtn) from phosphatidylserine (PtdSer). In Rhodopseudomonas palustris (strain HaA2), this protein is Phosphatidylserine decarboxylase proenzyme.